The primary structure comprises 431 residues: Histidinol dehydrogenase (431 aa).

Tyr-127, Gln-185, and Asn-208 together coordinate NAD(+). Residues Ser-234, Gln-256, and His-259 each contribute to the substrate site. Zn(2+) is bound by residues Gln-256 and His-259. Catalysis depends on proton acceptor residues Glu-323 and His-324. Residues His-324, Asp-357, Glu-411, and His-416 each contribute to the substrate site. Residue Asp-357 participates in Zn(2+) binding. A Zn(2+)-binding site is contributed by His-416.

It belongs to the histidinol dehydrogenase family. Zn(2+) is required as a cofactor.

It carries out the reaction L-histidinol + 2 NAD(+) + H2O = L-histidine + 2 NADH + 3 H(+). The protein operates within amino-acid biosynthesis; L-histidine biosynthesis; L-histidine from 5-phospho-alpha-D-ribose 1-diphosphate: step 9/9. Functionally, catalyzes the sequential NAD-dependent oxidations of L-histidinol to L-histidinaldehyde and then to L-histidine. This Vibrio vulnificus (strain YJ016) protein is Histidinol dehydrogenase.